The chain runs to 191 residues: MEYFDIRKMPVNLWRNGAGETREICCFPPATRDFHWRASIASIAGNGEFSLFPGVERVITLLEGGEVMLEGVNAFTHTLKRHQPFTFAGDSVVKATLSEGQMSMDLNIMTRRDRCKAKVRVADRTFTTFGSRGGVVFVISGAWQLGDKLLTADQGACWHDGKHTLRLLKPEGQLLFSEITWLPGYTPDTVQ.

It belongs to the Ves family.

This is Protein Ves from Citrobacter koseri (strain ATCC BAA-895 / CDC 4225-83 / SGSC4696).